We begin with the raw amino-acid sequence, 143 residues long: CRISPR-associated endoribonuclease Cas2 (143 aa).

A Mg(2+)-binding site is contributed by Asp14.

Belongs to the CRISPR-associated endoribonuclease Cas2 protein family. As to quaternary structure, homodimer, forms a heterotetramer with a Cas1 homodimer. Mg(2+) is required as a cofactor.

Functionally, CRISPR (clustered regularly interspaced short palindromic repeat), is an adaptive immune system that provides protection against mobile genetic elements (viruses, transposable elements and conjugative plasmids). CRISPR clusters contain sequences complementary to antecedent mobile elements and target invading nucleic acids. CRISPR clusters are transcribed and processed into CRISPR RNA (crRNA). Functions as a ssRNA-specific endoribonuclease. Involved in the integration of spacer DNA into the CRISPR cassette. The sequence is that of CRISPR-associated endoribonuclease Cas2 from Campylobacter jejuni subsp. jejuni serotype O:2 (strain ATCC 700819 / NCTC 11168).